The sequence spans 232 residues: Phosphatidylserine decarboxylase proenzyme (232 aa).

The Schiff-base intermediate with substrate; via pyruvic acid role is filled by S201. Residue S201 is modified to Pyruvic acid (Ser); by autocatalysis.

It belongs to the phosphatidylserine decarboxylase family. PSD-A subfamily. In terms of assembly, heterodimer of a large membrane-associated beta subunit and a small pyruvoyl-containing alpha subunit. Requires pyruvate as cofactor. Is synthesized initially as an inactive proenzyme. Formation of the active enzyme involves a self-maturation process in which the active site pyruvoyl group is generated from an internal serine residue via an autocatalytic post-translational modification. Two non-identical subunits are generated from the proenzyme in this reaction, and the pyruvate is formed at the N-terminus of the alpha chain, which is derived from the carboxyl end of the proenzyme. The post-translation cleavage follows an unusual pathway, termed non-hydrolytic serinolysis, in which the side chain hydroxyl group of the serine supplies its oxygen atom to form the C-terminus of the beta chain, while the remainder of the serine residue undergoes an oxidative deamination to produce ammonia and the pyruvoyl prosthetic group on the alpha chain.

It localises to the cell membrane. The enzyme catalyses a 1,2-diacyl-sn-glycero-3-phospho-L-serine + H(+) = a 1,2-diacyl-sn-glycero-3-phosphoethanolamine + CO2. The protein operates within phospholipid metabolism; phosphatidylethanolamine biosynthesis; phosphatidylethanolamine from CDP-diacylglycerol: step 2/2. Its function is as follows. Catalyzes the formation of phosphatidylethanolamine (PtdEtn) from phosphatidylserine (PtdSer). The protein is Phosphatidylserine decarboxylase proenzyme of Mycolicibacterium gilvum (strain PYR-GCK) (Mycobacterium gilvum (strain PYR-GCK)).